Consider the following 437-residue polypeptide: Glutamyl-tRNA reductase (437 aa).

Substrate is bound by residues 46–49 (TCNR), S97, 102–104 (EEQ), and Q108. C47 functions as the Nucleophile in the catalytic mechanism. 177–182 (GAGEMG) lines the NADP(+) pocket. Positions 410–437 (NGRVSEGKDAKVEEGKPEVDVQRSKAES) are disordered. Residues 414 to 437 (SEGKDAKVEEGKPEVDVQRSKAES) show a composition bias toward basic and acidic residues.

It belongs to the glutamyl-tRNA reductase family. In terms of assembly, homodimer.

The catalysed reaction is (S)-4-amino-5-oxopentanoate + tRNA(Glu) + NADP(+) = L-glutamyl-tRNA(Glu) + NADPH + H(+). Its pathway is porphyrin-containing compound metabolism; protoporphyrin-IX biosynthesis; 5-aminolevulinate from L-glutamyl-tRNA(Glu): step 1/2. In terms of biological role, catalyzes the NADPH-dependent reduction of glutamyl-tRNA(Glu) to glutamate 1-semialdehyde (GSA). This is Glutamyl-tRNA reductase from Archaeoglobus fulgidus (strain ATCC 49558 / DSM 4304 / JCM 9628 / NBRC 100126 / VC-16).